The sequence spans 1068 residues: Retinoblastoma-like protein 1 (1068 aa).

T332 is subject to Phosphothreonine; by CDK2. Residue T369 is modified to Phosphothreonine; by CDK4. T385 bears the Phosphothreonine; by CDK2 mark. Residues 385-584 (TPVASATQSV…WEALQVSANK (200 aa)) form a domain A region. The interval 385-949 (TPVASATQSV…GRVKSFALKY (565 aa)) is pocket; binds T and E1A. The spacer stretch occupies residues 585–780 (VPTCEEVIFP…AQEVHSTGIN (196 aa)). S640 bears the Phosphoserine; by CDK2 and CDK4 mark. Phosphoserine occurs at positions 650 and 749. S762 bears the Phosphoserine; by CDK2 mark. The interval 781–949 (RPKRTGSLAL…GRVKSFALKY (169 aa)) is domain B. Phosphoserine; by CDK2 and CDK4 is present on residues S964 and S975. At S988 the chain carries Phosphoserine; by CDK2. T997 is modified (phosphothreonine; by CDK2). S1009 is modified (phosphoserine; by CDK2). At S1041 the chain carries Phosphoserine.

It belongs to the retinoblastoma protein (RB) family. As to quaternary structure, component of the DREAM complex (also named LINC complex) at least composed of E2F4, E2F5, LIN9, LIN37, LIN52, LIN54, MYBL1, MYBL2, RBL1, RBL2, RBBP4, TFDP1 and TFDP2. The complex exists in quiescent cells where it represses cell cycle-dependent genes. It dissociates in S phase when LIN9, LIN37, LIN52 and LIN54 form a subcomplex that binds to MYBL2. Interacts with AATF. Interacts with KDM5A. Interacts with KMT5B and KMT5C. Interacts with USP4. Interacts with RBBP9. In terms of assembly, (Microbial infection) Interacts with SV40 and JC virus large T antigens. Large T antigen, but not E1A, binds only to the unphosphorylated form. (Microbial infection) Interacts with JC virus small t antigen. Post-translationally, cell-cycle arrest properties are inactivated by phosphorylation on Thr-332, Ser-640, Ser-964 and Ser-975 by CDK4.

It localises to the nucleus. Key regulator of entry into cell division. Directly involved in heterochromatin formation by maintaining overall chromatin structure and, in particular, that of constitutive heterochromatin by stabilizing histone methylation. Recruits and targets histone methyltransferases KMT5B and KMT5C, leading to epigenetic transcriptional repression. Controls histone H4 'Lys-20' trimethylation. Probably acts as a transcription repressor by recruiting chromatin-modifying enzymes to promoters. Potent inhibitor of E2F-mediated trans-activation. May act as a tumor suppressor. This chain is Retinoblastoma-like protein 1 (RBL1), found in Homo sapiens (Human).